Here is a 172-residue protein sequence, read N- to C-terminus: C-phycocyanin beta chain (172 aa).

Asn-72 carries the N4-methylasparagine modification. Residues Cys-82 and Cys-153 each contribute to the (2R,3E)-phycocyanobilin site.

Belongs to the phycobiliprotein family. In terms of assembly, heterodimer of an alpha and a beta subunit, which further assembles into trimers and the trimers into hexamers. The basic functional unit of phycobiliproteins is a ring-shaped hexamer formed from two back-to-back trimers contacting via the alpha chain subunits. The trimers are composed of alpha/beta subunit heterodimers arranged around a three-fold axis of symmetry. The phycoerythrins also contain a gamma subunit which is located in the center of the hexamer. Contains two covalently linked phycocyanobilin chromophores.

The protein resides in the plastid. Its subcellular location is the cyanelle thylakoid membrane. In terms of biological role, light-harvesting photosynthetic bile pigment-protein from the phycobiliprotein complex (phycobilisome, PBS). Phycocyanin is the major phycobiliprotein in the PBS rod. This Cyanophora paradoxa protein is C-phycocyanin beta chain (cpcB).